The following is a 293-amino-acid chain: Oxidoreductase clz16 (293 aa).

Belongs to the asaB hydroxylase/desaturase family.

Its pathway is secondary metabolite biosynthesis. Oxidoreductase; part of the gene cluster that mediates the biosynthesis of squalestatin S1 (SQS1, also known as zaragozic acid A), a heavily oxidized fungal polyketide that offers potent cholesterol lowering activity by targeting squalene synthase (SS). SQS1 is composed of a 2,8-dioxobicyclic[3.2.1]octane-3,4,5-tricarboxyclic acid core that is connected to two lipophilic polyketide arms. These initial steps feature the priming of an unusual benzoic acid starter unit onto the highly reducing polyketide synthase clz14, followed by oxaloacetate extension and product release to generate a tricarboxylic acid containing product. The phenylalanine ammonia lyase (PAL) clz10 and the acyl-CoA ligase clz12 are involved in transforming phenylalanine into benzoyl-CoA. The citrate synthase-like protein clz17 is involved in connecting the C-alpha-carbons of the hexaketide chain and oxaloacetate to afford the tricarboxylic acid unit. The potential hydrolytic enzymes, clz11 and clz13, are in close proximity to pks2 and may participate in product release. On the other side, the tetraketide arm is synthesized by a the squalestatin tetraketide synthase clz2 and enzymatically esterified to the core in the last biosynthetic step, by the acetyltransferase clz6. The biosynthesis of the tetraketide must involve 3 rounds of chain extension. After the first and second rounds methyl-transfer occurs, and in all rounds of extension the ketoreductase and dehydratase are active. The enoyl reductase and C-MeT of clz2 are not active in the final round of extension. The acetyltransferase clz6 appears to have a broad substrate selectivity for its acyl CoA substrate, allowing the in vitro synthesis of novel squalestatins. The biosynthesis of SQS1 requires several oxidative steps likely performed by oxidoreductases clz3, clz15 and clz16. Finally, in support of the identification of the cluster as being responsible for SQS1 production, the cluster contains a gene encoding a putative squalene synthase (SS) clz20, suggesting a likely mechanism for self-resistance. This chain is Oxidoreductase clz16, found in Cochliobolus lunatus (Filamentous fungus).